The primary structure comprises 765 residues: MNTSGDPAQTGPEGCRGTMSAEEDARWLRWVTQQFKTIAGEDGEISLQEFKAALHVKESFFAERFFALFDSDRSGTITLQELQEALTLLIHGSPMDKLKFLFQVYDIDVCARQGASAGTEWGAGAGPHWASSPLGTGSGSIDPDELRTVLQSCLRESAISLPDEKLDQLTLALFESADADGNGAITFEELRDELQRFPGVMENLTISAAHWLTAPAPRPRPRRPRQLTRAYWHNHRSQLFCLATYAGLHVLLFGLAASAHRDLGASVMVAKGCGQCLNFDCSFIAVLMLRRCLTWLRATWLAQVLPLDQNIQFHQLMGYVVVGLSLVHTVAHTVNFVLQAQAEASPFQFWELLLTTRPGIGWVHGSASPTGVALLLLLLLMFICSSSCIRRSGHFEVFYWTHLSYLLVWLLLIFHGPNFWKWLLVPGILFFLEKAIGLAVSRMAAVCIMEVNLLPSKVTHLLIKRPPFFHYRPGDYLYLNIPTIARYEWHPFTISSAPEQKDTIWLHIRSQGQWTNRLYESFKASDPLGRGSKRLSRSVTMRKSQRSSKGSEILLEKHKFCNIKCYIDGPYGTPTRRIFASEHAVLIGAGIGITPFASILQSIMYRHQKRKHTCPSCQHSWIEGVQDNMKLHKVDFIWINRDQRSFEWFVSLLTKLEMDQAEEAQYGRFLELHMYMTSALGKNDMKAIGLQMALDLLANKEKKDSITGLQTRTQPGRPDWSKVFQKVAAEKKGKVQVFFCGSPALAKVLKGHCEKFGFRFFQENF.

The N-terminal lobe of N-terminal regulatory EF domain stretch occupies residues Met-1–Ile-77. The N-terminal regulatory EF domain stretch occupies residues Met-1–Leu-161. At Met-1–Gln-238 the chain is on the cytoplasmic side. EF-hand domains lie at Arg-26 to Val-56 and Lys-57 to Gly-92. Residues Asp-42, Glu-44, Glu-49, Asp-70, Asp-72, Ser-74, Thr-76, Glu-81, and Asp-106 each contribute to the Ca(2+) site. The segment at Thr-78–Leu-161 is C-terminal lobe of N-terminal regulatory EF domain. In terms of domain architecture, EF-hand 3; atypical; contains an insert of 28 residues spans Ser-93–Glu-156. Ile-107 carries the S-nitrosocysteine modification. Asp-108, Ser-138, Ser-140, Glu-145, Asp-178, Asp-180, Asn-182, and Glu-189 together coordinate Ca(2+). The disordered stretch occupies residues Gly-122–Ile-141. The region spanning Lys-165 to Val-200 is the EF-hand 4 domain. The chain crosses the membrane as a helical span at residues Leu-239 to Ala-259. S-nitrosocysteine is present on Ala-246. At His-260 to Ser-266 the chain is on the extracellular side. A helical membrane pass occupies residues Val-267 to Leu-289. Topologically, residues Arg-290–Met-317 are cytoplasmic. In terms of domain architecture, Ferric oxidoreductase spans Leu-293–Val-440. Residues Gly-318–Leu-338 traverse the membrane as a helical segment. Over Gln-339–Trp-362 the chain is Extracellular. Residues Val-363–Ile-383 traverse the membrane as a helical segment. Over Cys-384–His-394 the chain is Cytoplasmic. Residues Phe-395–Pro-417 form a helical membrane-spanning segment. C-terminal catalytic dehydrogenase domain stretches follow at residues Phe-398–Asp-719 and Gly-416–Val-737. Residues Asn-418–Lys-434 are Extracellular-facing. A helical membrane pass occupies residues Ala-435 to Pro-455. Positions Ser-441–Arg-577 constitute an FAD-binding FR-type domain. The Cytoplasmic portion of the chain corresponds to Ser-456–His-583. Residue Asp-475 is modified to Phosphoserine; by CaMK2. The residue at position 490 (His-490) is a Phosphothreonine; by PKC/PRKCA. The residue at position 494 (Ile-494) is a Phosphothreonine; by CaMK2 and PKC/PRKCA. Pro-498 carries the phosphoserine; by CaMK2 and PKC/PRKCA modification. Phosphoserine; by CaMK2 is present on Asp-502. S-nitrosocysteine is present on Tyr-519. Residues Ala-584–Met-604 traverse the membrane as a helical segment. At Tyr-605–Phe-765 the chain is on the extracellular side. Phosphoserine; by CaMK2 is present on Asp-659. Leu-694 carries the post-translational modification S-nitrosocysteine.

As to quaternary structure, homooligomer. FAD serves as cofactor. It depends on Mg(2+) as a cofactor. Post-translationally, phosphorylation at Ser-475 by CaMK2 and at Ser-490, Thr-494 and Ser-498 by PKC/PRKCA positively regulates its catalytic activity. S-nitrosylation in response to nitric oxide inhibits its catalytic activity. Mainly expressed in pachytene spermatocytes of testis and in lymphocyte-rich areas of spleen and lymph nodes. Also detected in ovary, placenta, pancreas, cardiac fibroblasts. Expressed in B-cells and prostate malignant cells. As to expression, expressed in spleen. Expressed in endothelial cells, pulmonary artery smooth muscle cells and epithelial colorectal adenocarcinoma cells. In terms of tissue distribution, expressed in microvascular endothelial cells (at protein level). Expressed in testis. Expressed in endothelial cells and pulmonary artery smooth muscle cells. Expressed in pulmonary artery smooth muscle cells and epithelial colorectal adenocarcinoma cells. As to expression, expressed in endothelial cells and pulmonary artery smooth muscle cells. In terms of tissue distribution, expressed in microvascular endothelial cells (at protein level).

It is found in the endoplasmic reticulum. The protein resides in the cell membrane. The enzyme catalyses NADPH + 2 O2 = 2 superoxide + NADP(+) + H(+). Activated by calcium which induces conformational changes and interaction between the N-terminal regulatory region and the C-terminal catalytic region. Inhibited by diphenylene iodonium. Calcium-dependent NADPH oxidase that catalyzes the generation of superoxide from molecular oxygen utilizing NADPH as an electron donor. May play a role in cell growth and apoptosis. Its function is as follows. Calcium-dependent NADPH oxidase that catalyzes the generation of superoxide from molecular oxygen utilizing NADPH as an electron donor. Involved in endothelial generation of reactive oxygen species (ROS), proliferation and angiogenesis and contributes to endothelial response to thrombin. Regulates redox-dependent processes in lymphocytes and spermatozoa. In terms of biological role, calcium-dependent NADPH oxidase that catalyzes the generation of superoxide from molecular oxygen utilizing NADPH as an electron donor. Functionally, this isoform lacks calcium-binding domains and was showed to present a NADPH oxidase activity in a calcium-independent manner. May be involved in endothelial generation of reactive oxygen species (ROS), proliferation and angiogenesis and contribute to endothelial response to thrombin. However another study showed an absence of oxidase activity. Subject to rapid degradation. Lacks calcium-dependent NADPH oxidase activity. In Homo sapiens (Human), this protein is NADPH oxidase 5.